The following is a 118-amino-acid chain: Large ribosomal subunit protein bL20 (118 aa).

It belongs to the bacterial ribosomal protein bL20 family.

Binds directly to 23S ribosomal RNA and is necessary for the in vitro assembly process of the 50S ribosomal subunit. It is not involved in the protein synthesizing functions of that subunit. The polypeptide is Large ribosomal subunit protein bL20 (Buchnera aphidicola subsp. Acyrthosiphon pisum (strain 5A)).